The primary structure comprises 80 residues: Metallothionein-like protein type 2, MT2-4/MT2-25 (80 aa).

The protein belongs to the metallothionein superfamily. Type 15 family.

In terms of biological role, metallothioneins have a high content of cysteine residues that bind various heavy metals. In Brassica juncea (Indian mustard), this protein is Metallothionein-like protein type 2, MT2-4/MT2-25.